The following is a 150-amino-acid chain: MQIILLEKVANLGNLGEVVKVKDGYARNFLIPSGAARRATETAVKEFEAKRIELEKAAAAKLAASQAEGEKLNGKTISITQKAGVDGRLFGSVTNHDIAEALGKAGFKVVKSQVRLPNGPLKTVGEHPVTVALHTDVVVDVNVTVVGETD.

Belongs to the bacterial ribosomal protein bL9 family.

Functionally, binds to the 23S rRNA. The chain is Large ribosomal subunit protein bL9 from Methylibium petroleiphilum (strain ATCC BAA-1232 / LMG 22953 / PM1).